We begin with the raw amino-acid sequence, 461 residues long: Putative aldehyde dehydrogenase FUS7 (461 aa).

220-225 is an NAD(+) binding site; sequence GSTATG. Active-site residues include Glu242 and Cys276.

This sequence belongs to the aldehyde dehydrogenase family.

The catalysed reaction is an aldehyde + NAD(+) + H2O = a carboxylate + NADH + 2 H(+). Its function is as follows. Putative aldehyde dehydrogenase; part of the gene cluster that mediates the biosynthesis of the mycotoxin fusarin C. Within the cluster, FUS1, FUS2, FUS8 and FUS9 are sufficient for fusarin production. The other FUS cluster members are not essential for fusarin C biosynthesis. The chain is Putative aldehyde dehydrogenase FUS7 from Gibberella moniliformis (strain M3125 / FGSC 7600) (Maize ear and stalk rot fungus).